The sequence spans 134 residues: Small ribosomal subunit protein uS9 (134 aa).

The tract at residues 109 to 134 (DARRTEPHKPSKSSKGPRAKRQKSYR) is disordered. Positions 118 to 134 (PSKSSKGPRAKRQKSYR) are enriched in basic residues.

The protein belongs to the universal ribosomal protein uS9 family.

This Methanococcus maripaludis (strain C7 / ATCC BAA-1331) protein is Small ribosomal subunit protein uS9.